Consider the following 537-residue polypeptide: MDKLYLQLNLCTDIIEKGATCHTAKIAWLNEFCAAFHTFASKFKSYLIELAPKNELEGNIRIHVETIYLCFTQVITCITQLERTINIEGTLAAGAQLLATRTHFLDRIDWCLRRLQASVYQLAEEAIASTPVKLEDLSFVELLDLALDKLETYSEIVPAQSQAEQEDSDEIDQLVDHVNHLIKHALAFANVALESDKKALSAIYETVLEESGIFEKNFKTHNPNRRKLEALSLQPALYSLETYLNEALFDLIFTSMFDTEKASIKRLRNVLQSCESSGAVDGLLSDFDINVDRIQQIGIFAIAFTQDVKTKTIIRSCLASLESLDACIVPAFQLQTTSLASYHADILEHHFRQELMVFRNVIHEIIDSRALINNYLDILAESIDNAEKLYPKGYLLQVAQMGNVIYQHFQLRANNQELIADEEGKRLHQDFVAILHECQAVLEISVHVDLKRIIKRLKILYSILAKLRDVCDKLVYERAMSNNEKSMTTSTKLRQHSFANPEIGHTIANCNRTDSSDSLSHESDLISFQLTEILRIT.

It localises to the cytoplasm. It is found in the cell membrane. Required for the cellularization of the syncytial blastoderm embryo. Involved in the localization of the actin filaments just prior to and during plasma membrane invagination. Sry-alpha together with nullo and bnk may provide auxiliary functions, by acting both to stabilize a large and dynamic microfilament structure and regulate its functions. The polypeptide is Serendipity locus protein alpha (Sry-alpha) (Drosophila virilis (Fruit fly)).